A 433-amino-acid polypeptide reads, in one-letter code: MSLTHYSGLAAAVSMSLILTACGGQTPNSARFQPVFPGTVSRPVLSAQEAGRFTPQHYFAHGGEYAKPVADGWTPTPIDTSRVTAAYVVGPRAGVAGATHTSIQQAVNAALRQHPGQTRVYIKLLPGTYTGTVYVPEGAPPLTLFGAGDRPEQVVVSLALDSMMSPADYRARVNPHGQYQPADPAWYMYNACATKAGATINTTCSAVMWSQSNDFQLKNLTVVNALLDTVDSGTHQAVALRTDGDRVQLENVRLLSRQDTFFVNTSDRQNSYVTDHYSRAYIKDSYIEGDVDYVFGRATAVFDRVRFHTVSSRGSKEAYVFAPDSIPSVKYGFLVINSQLTGDNGYRGAQKAKLGRAWDQGAKQTGYLPGKTANGQLVIRDSTIDSSYDLANPWGAAATTDRPFKGNISPQRDLDDIHFNRLWEYNTQVLLHE.

The first 21 residues, 1-21, serve as a signal peptide directing secretion; the sequence is MSLTHYSGLAAAVSMSLILTA. The N-palmitoyl cysteine moiety is linked to residue cysteine 22. Cysteine 22 is lipidated: S-diacylglycerol cysteine. Residues 22–433 are Periplasmic-facing; sequence CGGQTPNSAR…EYNTQVLLHE (412 aa). Substrate is bound by residues threonine 202 and glutamine 236. Aspartate 259 acts as the Proton donor in catalysis. The Nucleophile role is filled by aspartate 292. Substrate is bound by residues arginine 356 and tryptophan 358.

This sequence belongs to the pectinesterase family.

It is found in the cell outer membrane. It catalyses the reaction [(1-&gt;4)-alpha-D-galacturonosyl methyl ester](n) + n H2O = [(1-&gt;4)-alpha-D-galacturonosyl](n) + n methanol + n H(+). It participates in glycan metabolism; pectin degradation; 2-dehydro-3-deoxy-D-gluconate from pectin: step 1/5. Probably involved in the degradation of methylated oligogalacturonides present in the periplasm. More active on methylated oligogalacturides than on pectin. The polypeptide is Pectinesterase B (Dickeya dadantii (strain 3937) (Erwinia chrysanthemi (strain 3937))).